Here is a 404-residue protein sequence, read N- to C-terminus: Probable tRNA sulfurtransferase (404 aa).

In terms of domain architecture, THUMP spans 60 to 165 (TAVAESLKQV…EEAAYLSYET (106 aa)). Residues 183-184 (ML), 208-209 (HF), Arg265, Gly287, and Gln296 contribute to the ATP site.

Belongs to the ThiI family.

It is found in the cytoplasm. The enzyme catalyses [ThiI sulfur-carrier protein]-S-sulfanyl-L-cysteine + a uridine in tRNA + 2 reduced [2Fe-2S]-[ferredoxin] + ATP + H(+) = [ThiI sulfur-carrier protein]-L-cysteine + a 4-thiouridine in tRNA + 2 oxidized [2Fe-2S]-[ferredoxin] + AMP + diphosphate. It catalyses the reaction [ThiS sulfur-carrier protein]-C-terminal Gly-Gly-AMP + S-sulfanyl-L-cysteinyl-[cysteine desulfurase] + AH2 = [ThiS sulfur-carrier protein]-C-terminal-Gly-aminoethanethioate + L-cysteinyl-[cysteine desulfurase] + A + AMP + 2 H(+). It functions in the pathway cofactor biosynthesis; thiamine diphosphate biosynthesis. Its function is as follows. Catalyzes the ATP-dependent transfer of a sulfur to tRNA to produce 4-thiouridine in position 8 of tRNAs, which functions as a near-UV photosensor. Also catalyzes the transfer of sulfur to the sulfur carrier protein ThiS, forming ThiS-thiocarboxylate. This is a step in the synthesis of thiazole, in the thiamine biosynthesis pathway. The sulfur is donated as persulfide by IscS. The protein is Probable tRNA sulfurtransferase of Streptococcus pneumoniae serotype 19F (strain G54).